The chain runs to 159 residues: uncharacterized protein (159 aa).

A run of 4 helical transmembrane segments spans residues leucine 22 to isoleucine 42, proline 45 to leucine 65, isoleucine 80 to leucine 100, and phenylalanine 104 to phenylalanine 124.

Its subcellular location is the membrane. This is an uncharacterized protein from Schizosaccharomyces pombe (strain 972 / ATCC 24843) (Fission yeast).